Reading from the N-terminus, the 275-residue chain is Exosome complex component RRP40 (275 aa).

The residue at position 2 (alanine 2) is an N-acetylalanine. A Glycyl lysine isopeptide (Lys-Gly) (interchain with G-Cter in SUMO2) cross-link involves residue lysine 151.

It belongs to the RRP40 family. As to quaternary structure, component of the RNA exosome core complex (Exo-9), composed of EXOSC1, EXOSC2, EXOSC3, EXOSC4, EXOSC5, EXOSC6, EXOSC7, EXOSC8 and EXOSC9; within the complex interacts with EXOSC5 and EXOSC9. The catalytically inactive RNA exosome core complex (Exo-9) associates with the catalytic subunit EXOSC10/RRP6. Exo-9 may associate with DIS3 to form the nucleolar exosome complex, or DIS3L to form the cytoplasmic exosome complex. Exo-9 is formed by a hexameric base ring consisting of the heterodimers EXOSC4-EXOSC9, EXOSC5-EXOSC8 and EXOSC6-EXOSC7, and a cap ring consisting of EXOSC1, EXOSC2 and EXOSC3. The RNA exosome complex associates with cofactors C1D/RRP47, MPHOSPH6/MPP6 and MTREX/MTR4. Interacts with MPHOSPH6/MPP6; the interaction is direct. Interacts with GTPBP1. Interacts with ZC3HAV1. Interacts with DDX17 only in the presence of ZC3HAV1 in an RNA-independent manner. Interacts with DHX36; this interaction occurs in a RNase-insensitive manner. Interacts with HBS1L isoform 2.

The protein localises to the cytoplasm. It localises to the nucleus. The protein resides in the nucleolus. Its function is as follows. Non-catalytic component of the RNA exosome complex which has 3'-&gt;5' exoribonuclease activity and participates in a multitude of cellular RNA processing and degradation events. In the nucleus, the RNA exosome complex is involved in proper maturation of stable RNA species such as rRNA, snRNA and snoRNA, in the elimination of RNA processing by-products and non-coding 'pervasive' transcripts, such as antisense RNA species and promoter-upstream transcripts (PROMPTs), and of mRNAs with processing defects, thereby limiting or excluding their export to the cytoplasm. The RNA exosome may be involved in Ig class switch recombination (CSR) and/or Ig variable region somatic hypermutation (SHM) by targeting AICDA deamination activity to transcribed dsDNA substrates. In the cytoplasm, the RNA exosome complex is involved in general mRNA turnover and specifically degrades inherently unstable mRNAs containing AU-rich elements (AREs) within their 3' untranslated regions, and in RNA surveillance pathways, preventing translation of aberrant mRNAs. It seems to be involved in degradation of histone mRNA. The catalytic inactive RNA exosome core complex of 9 subunits (Exo-9) is proposed to play a pivotal role in the binding and presentation of RNA for ribonucleolysis, and to serve as a scaffold for the association with catalytic subunits and accessory proteins or complexes. EXOSC3 as peripheral part of the Exo-9 complex stabilizes the hexameric ring of RNase PH-domain subunits through contacts with EXOSC9 and EXOSC5. In Bos taurus (Bovine), this protein is Exosome complex component RRP40 (EXOSC3).